An 863-amino-acid chain; its full sequence is Paramyosin (863 aa).

The segment at 1–18 is nonhelical region; that stretch reads MSESHVKISRTIIRGTSP. Residues 19 to 836 are a coiled coil; that stretch reads STVRLESRVR…ERTITIKRTI (818 aa). The tract at residues 837–863 is nonhelical region; the sequence is GGPGSRAVSVVREINSVSRGNRATSIM.

It belongs to the paramyosin family. As to quaternary structure, homodimer or monomer in secreted form.

It is found in the cytoplasm. It localises to the myofibril. The protein resides in the secreted. In terms of biological role, paramyosin is a major structural component of many thick filaments isolated from invertebrate muscles. It is a prominent antigen in human cysticercosis, may have a role as a modulator of the host immune response. It is able to bind collagen and has complement inhibitor activity. The sequence is that of Paramyosin (PMY) from Taenia solium (Pork tapeworm).